The sequence spans 320 residues: tRNA dimethylallyltransferase (320 aa).

16–23 (GPTASGKT) serves as a coordination point for ATP. 18 to 23 (TASGKT) contacts substrate. 3 interaction with substrate tRNA regions span residues 41-44 (DSAL), 165-169 (QRIQR), and 247-252 (RCVGYR).

The protein belongs to the IPP transferase family. As to quaternary structure, monomer. It depends on Mg(2+) as a cofactor.

The catalysed reaction is adenosine(37) in tRNA + dimethylallyl diphosphate = N(6)-dimethylallyladenosine(37) in tRNA + diphosphate. Functionally, catalyzes the transfer of a dimethylallyl group onto the adenine at position 37 in tRNAs that read codons beginning with uridine, leading to the formation of N6-(dimethylallyl)adenosine (i(6)A). The protein is tRNA dimethylallyltransferase of Azoarcus sp. (strain BH72).